Here is a 511-residue protein sequence, read N- to C-terminus: Glucans biosynthesis protein G (511 aa).

The first 22 residues, 1–22 (MMKMRWLSAAVMLTLYTSSSWA), serve as a signal peptide directing secretion.

This sequence belongs to the OpgD/OpgG family.

It is found in the periplasm. It functions in the pathway glycan metabolism; osmoregulated periplasmic glucan (OPG) biosynthesis. Functionally, involved in the biosynthesis of osmoregulated periplasmic glucans (OPGs). This Escherichia coli O81 (strain ED1a) protein is Glucans biosynthesis protein G.